Here is a 156-residue protein sequence, read N- to C-terminus: 17 kDa lipoprotein (156 aa).

The N-terminal stretch at Met-1 to Leu-21 is a signal peptide. Cys-22 carries the N-palmitoyl cysteine lipid modification. Residue Cys-22 is the site of S-diacylglycerol cysteine attachment.

The protein localises to the cell membrane. In Treponema pallidum (strain Nichols), this protein is 17 kDa lipoprotein (tpp17).